The primary structure comprises 362 residues: Type-2 angiotensin II receptor (362 aa).

Topologically, residues 1–44 (MKANFSLATISKNITSSLHVGFVNISSNESTFNCSHKPSDKHLD) are extracellular. Residues Asn-4, Asn-13, Asn-24, Asn-28, and Asn-33 are each glycosylated (N-linked (GlcNAc...) asparagine). Intrachain disulfides connect Cys-34-Cys-289 and Cys-116-Cys-194. A helical transmembrane segment spans residues 45 to 69 (AIPVLYYIIFGVGFLVNTIVVTLFC). Residues 70-79 (CQKGPKKVSS) lie on the Cytoplasmic side of the membrane. Residues 80 to 103 (IYIFNLAVADLLLLATLPLWATYY) form a helical membrane-spanning segment. The angiotensin II site is built by Tyr-102 and Tyr-103. Residues 104–113 (SHRYDWIFGP) lie on the Extracellular side of the membrane. The helical transmembrane segment at 114–139 (VMCKVFGSFLTLNMFASIFFITCMSV) threads the bilayer. The Cytoplasmic portion of the chain corresponds to 140-158 (DRYQSVIYPFLSQRRNPWQ). Residues 159 to 180 (ASYIVPLVWCMACLSSLPTFYF) traverse the membrane as a helical segment. Angiotensin II-binding residues include Arg-181, Tyr-203, and Lys-214. Topologically, residues 181–205 (RDVRTIEYLGVNACIMAFPPEKYAQ) are extracellular. The helical transmembrane segment at 206–231 (WSAGIALMKNILGFIIPLIFIATCYF) threads the bilayer. Topologically, residues 232 to 256 (GIRKHLLKTNSYGKNRITRDQVLKM) are cytoplasmic. Residues 257-280 (AAAVVLAFIICWLPFHVLTFLDAL) form a helical membrane-spanning segment. Asp-278 provides a ligand contact to angiotensin II. The Extracellular segment spans residues 281-293 (AWMGVINSCEVIA). A helical membrane pass occupies residues 294 to 319 (VIDLALPFAILLGFTNSCINPFLYCF). An angiotensin II-binding site is contributed by Asp-296. The Cytoplasmic segment spans residues 320-362 (VGNRFQQKLRRVFRVPITWLQGKRENGSCGKSSSFREMETFVS). A helix VIII region spans residues 323–332 (RFQQKLRRVF).

It belongs to the G-protein coupled receptor 1 family. As to quaternary structure, interacts with MTUS1.

The protein resides in the cell membrane. Its function is as follows. Receptor for angiotensin II, a vasoconstricting peptide. Signals primarily via a non-canonical G-protein- and beta-arrestin independent pathways. Cooperates with MTUS1 to inhibit ERK2 activation and cell proliferation. The sequence is that of Type-2 angiotensin II receptor (AGTR2) from Ovis aries (Sheep).